The chain runs to 605 residues: Anaerobic ribonucleoside-triphosphate reductase (605 aa).

His64 and His66 together coordinate dCTP. Residues His64, His66, Asp67, Glu100, and Lys103 each contribute to the dGTP site. DCTP-binding positions include Glu100, Lys103, Gln114, Lys146, and 445–448 (AENL). DATP is bound by residues Glu100, Lys103, Gln114, and Lys146. Position 100 (Glu100) interacts with dTTP. Gln114 and Lys146 together coordinate dTTP. Residues Lys146, Asn447, and Leu448 each contribute to the dGTP site. The region spanning 482–605 (ENITPFEKIS…KEIMHRVKHQ (124 aa)) is the Glycine radical domain. Zn(2+)-binding residues include Cys543, Cys546, Cys561, and Cys564. Gly580 bears the Glycine radical mark.

The protein belongs to the anaerobic ribonucleoside-triphosphate reductase family. As to quaternary structure, homodimer. Forms a tetramer composed of two NrdD and two NrdG subunits.

The catalysed reaction is a ribonucleoside 5'-triphosphate + formate + H(+) = a 2'-deoxyribonucleoside 5'-triphosphate + CO2 + H2O. Its activity is regulated as follows. Activated under anaerobic conditions by NrdG, a tightly associated activase. Activation involves the formation of a glycyl radical at Gly-580. Catalyzes the conversion of ribonucleotides into deoxyribonucleotides, which are required for DNA synthesis and repair. This is Anaerobic ribonucleoside-triphosphate reductase from Enterobacteria phage T4 (Bacteriophage T4).